The following is a 343-amino-acid chain: L-threonine 3-dehydrogenase (343 aa).

Cysteine 38 serves as a coordination point for Zn(2+). Catalysis depends on charge relay system residues threonine 40 and histidine 43. Residues histidine 63, glutamate 64, cysteine 93, cysteine 96, cysteine 99, and cysteine 107 each coordinate Zn(2+). NAD(+) is bound by residues isoleucine 175, aspartate 195, arginine 200, 262 to 264 (LGI), and 286 to 287 (IY).

Belongs to the zinc-containing alcohol dehydrogenase family. As to quaternary structure, homotetramer. It depends on Zn(2+) as a cofactor.

It is found in the cytoplasm. The enzyme catalyses L-threonine + NAD(+) = (2S)-2-amino-3-oxobutanoate + NADH + H(+). The protein operates within amino-acid degradation; L-threonine degradation via oxydo-reductase pathway; glycine from L-threonine: step 1/2. Catalyzes the NAD(+)-dependent oxidation of L-threonine to 2-amino-3-ketobutyrate. The protein is L-threonine 3-dehydrogenase of Burkholderia thailandensis (strain ATCC 700388 / DSM 13276 / CCUG 48851 / CIP 106301 / E264).